Here is a 175-residue protein sequence, read N- to C-terminus: Large ribosomal subunit protein uL10 (175 aa).

This sequence belongs to the universal ribosomal protein uL10 family. Part of the ribosomal stalk of the 50S ribosomal subunit. The N-terminus interacts with L11 and the large rRNA to form the base of the stalk. The C-terminus forms an elongated spine to which L12 dimers bind in a sequential fashion forming a multimeric L10(L12)X complex.

Its function is as follows. Forms part of the ribosomal stalk, playing a central role in the interaction of the ribosome with GTP-bound translation factors. The polypeptide is Large ribosomal subunit protein uL10 (Xylella fastidiosa (strain M23)).